Here is a 337-residue protein sequence, read N- to C-terminus: Anthranilate phosphoribosyltransferase (337 aa).

Residues G81, G84–D85, T89, N91–T94, K109–S117, and T121 each bind 5-phospho-alpha-D-ribose 1-diphosphate. G81 contributes to the anthranilate binding site. S93 serves as a coordination point for Mg(2+). Residue N112 participates in anthranilate binding. Residue R167 coordinates anthranilate. The Mg(2+) site is built by D225 and E226.

Belongs to the anthranilate phosphoribosyltransferase family. Homodimer. The cofactor is Mg(2+).

It catalyses the reaction N-(5-phospho-beta-D-ribosyl)anthranilate + diphosphate = 5-phospho-alpha-D-ribose 1-diphosphate + anthranilate. It participates in amino-acid biosynthesis; L-tryptophan biosynthesis; L-tryptophan from chorismate: step 2/5. Catalyzes the transfer of the phosphoribosyl group of 5-phosphorylribose-1-pyrophosphate (PRPP) to anthranilate to yield N-(5'-phosphoribosyl)-anthranilate (PRA). The sequence is that of Anthranilate phosphoribosyltransferase from Rhizobium meliloti (strain 1021) (Ensifer meliloti).